The sequence spans 270 residues: Tryptophan synthase alpha chain (270 aa).

Catalysis depends on proton acceptor residues Glu57 and Asp68.

Belongs to the TrpA family. As to quaternary structure, tetramer of two alpha and two beta chains.

It catalyses the reaction (1S,2R)-1-C-(indol-3-yl)glycerol 3-phosphate + L-serine = D-glyceraldehyde 3-phosphate + L-tryptophan + H2O. It participates in amino-acid biosynthesis; L-tryptophan biosynthesis; L-tryptophan from chorismate: step 5/5. Functionally, the alpha subunit is responsible for the aldol cleavage of indoleglycerol phosphate to indole and glyceraldehyde 3-phosphate. The protein is Tryptophan synthase alpha chain of Mycobacterium leprae (strain Br4923).